The primary structure comprises 418 residues: MGSSSFYRVLLLVGFCAPIFCMLSSNPYNQESSHLPSMKKNPASQVSPSNTRFSFLLYQRLAQENPGQNILFSPVSISTSLAMLSLGARSATKTQILRTLGFNFTWVSEPTIHMGFEYLVRSLNKCHQGRELRMGSVLFIRKELQLQATFLDRVKKLYGAKVFSEDFSNAATAQAQINSYVEKETKGKVVDVIQDLDSQTAMVLVNHIFFKANWTQPFSTANTNKSFPFLLSKGTTVHVPMMHQTESFAFGVDKELGCSILQMDYRGDAVAFFVLPGKGKMRQLEKSLSARRLRKWSRSLQKRWIKVFIPKFSISASYNLETILPKMGIRDAFNSNADFSGITKTHFLQVSKAAHKAVLDVSEEGTEAAAATTTKLIVRSRDTPSSIIAFKEPFLILLLDKNTESVLFLGKVENPRKM.

Residues 1 to 25 form the signal peptide; the sequence is MGSSSFYRVLLLVGFCAPIFCMLSS. Residues asparagine 103, asparagine 213, and asparagine 224 are each glycosylated (N-linked (GlcNAc...) asparagine).

Belongs to the serpin family.

The protein resides in the secreted. The protein is Serpin A9 (Serpina9) of Mus musculus (Mouse).